The following is a 228-amino-acid chain: Glycosylphosphatidylinositol-anchored high density lipoprotein-binding protein 1 (228 aa).

A signal peptide spans 1 to 22 (MKALRAVLLILLLSGQPGSGWA). A disordered region spans residues 21 to 32 (WAQEDGDADPEP). Residues 24–48 (EDGDADPEPENYNYDDDDDEEEEEE) form an important for LPL transport to the lumenal surface of endothelial cells region. Positions 24–49 (EDGDADPEPENYNYDDDDDEEEEEET) are enriched in acidic residues. Position 35 is a sulfotyrosine (Y35). The UPAR/Ly6 domain maps to 61 to 148 (LQCYFCQVLH…PWQNPQVQNP (88 aa)). Disulfide bonds link C63-C88, C66-C75, C81-C109, C113-C129, and C130-C135. A glycan (N-linked (GlcNAc...) asparagine) is linked at N76. The tract at residues 102–108 (LTTYSMW) is important for interaction with LPL. The tract at residues 145–200 (VQNPLGGRADSPLESGTRHPQGGKFSHPQVVKAAHPQSDGANLPKSGKANQPQGSG) is disordered. G198 is lipidated: GPI-anchor amidated glycine. Positions 199–228 (SGAGYPSGWTKFGNIALLLSFFTCLWASGA) are cleaved as a propeptide — removed in mature form.

Mostly monomer, but also homodimer and homooligomer. Interacts with lipoprotein lipase (LPL). Interacts with high affinity with high-density lipoprotein (HDL). Interacts with chylomicrons. Interacts with APOA5. Post-translationally, glycosylation of Asn-76 is critical for cell surface localization. Sulfation of a Tyr in the N-terminal acidic region increases the affinity for LPL. In terms of tissue distribution, detected in fat tissue. Detected on the luminal surface of capillary endothelial cells in heart, skeletal muscle and brown adipose tissue (at protein level). Detected in heart and brown adipose tissue. Expressed at lower levels in lung and liver.

It localises to the apical cell membrane. The protein localises to the basolateral cell membrane. The protein resides in the cell membrane. Mediates the transport of lipoprotein lipase LPL from the basolateral to the apical surface of endothelial cells in capillaries. Anchors LPL on the surface of endothelial cells in the lumen of blood capillaries. Thereby, plays an important role in lipolytic processing of chylomicrons by LPL, triglyceride metabolism and lipid homeostasis. Binds chylomicrons and phospholipid particles that contain APOA5. Binds high-density lipoprotein (HDL) and plays a role in the uptake of lipids from HDL. The sequence is that of Glycosylphosphatidylinositol-anchored high density lipoprotein-binding protein 1 from Mus musculus (Mouse).